Consider the following 387-residue polypeptide: Eukaryotic translation initiation factor 3 subunit M (387 aa).

The 160-residue stretch at 181 to 340 folds into the PCI domain; it reads LSSKVMIELL…HKVHITSTMH (160 aa).

The protein belongs to the eIF-3 subunit M family. In terms of assembly, component of the eukaryotic translation initiation factor 3 (eIF-3) complex. The eIF-3 complex interacts with pix.

It localises to the cytoplasm. The protein resides in the golgi apparatus. Component of the eukaryotic translation initiation factor 3 (eIF-3) complex, which is involved in protein synthesis of a specialized repertoire of mRNAs and, together with other initiation factors, stimulates binding of mRNA and methionyl-tRNAi to the 40S ribosome. The eIF-3 complex specifically targets and initiates translation of a subset of mRNAs involved in cell proliferation. The sequence is that of Eukaryotic translation initiation factor 3 subunit M from Drosophila erecta (Fruit fly).